A 285-amino-acid chain; its full sequence is Meiotically up-regulated gene 125 protein (285 aa).

It is found in the cytoplasm. It localises to the nucleus. Has a role in meiosis. This Schizosaccharomyces pombe (strain 972 / ATCC 24843) (Fission yeast) protein is Meiotically up-regulated gene 125 protein (mug125).